Reading from the N-terminus, the 52-residue chain is Lantibiotic epidermin (52 aa).

Positions 1 to 30 are excised as a propeptide; it reads MEAVKEKNDLFNLDVKVNAKESNDSGAEPR. A cross-link (lanthionine (Ser-Cys)) is located at residues 33 to 37; that stretch reads SKFIC. The segment at residues 38 to 41 is a cross-link (beta-methyllanthionine (Thr-Cys)); that stretch reads TPGC. At threonine 44 the chain carries (Z)-2,3-didehydrobutyrine. Residues 46–51 constitute a cross-link (lanthionine (Ser-Cys)); the sequence is SFNSYC. Positions 49-52 form a cross-link, S-(2-aminovinyl)-D-cysteine (Ser-Cys); the sequence is SYCC.

Belongs to the type A lantibiotic family. Maturation of lantibiotics involves the enzymatic conversion of Thr, and Ser into dehydrated AA and the formation of thioether bonds with cysteine. The C-terminal lanthionine undergoes decarboxylation. This is followed by membrane translocation and cleavage of the modified precursor. Post-translationally, the 2,3-didehydrobutyrine is determined to be the Z-isomer.

In terms of biological role, lanthionine-containing peptide antibiotic (lantibiotic) active on Gram-positive bacteria. The bactericidal activity of lantibiotics is based on depolarization of energized bacterial cytoplasmic membranes, initiated by the formation of aqueous transmembrane pores. This Staphylococcus epidermidis protein is Lantibiotic epidermin (epiA).